Consider the following 239-residue polypeptide: Pyrroloquinoline-quinone synthase (239 aa).

The protein belongs to the PqqC family.

It carries out the reaction 6-(2-amino-2-carboxyethyl)-7,8-dioxo-1,2,3,4,7,8-hexahydroquinoline-2,4-dicarboxylate + 3 O2 = pyrroloquinoline quinone + 2 H2O2 + 2 H2O + H(+). It participates in cofactor biosynthesis; pyrroloquinoline quinone biosynthesis. Ring cyclization and eight-electron oxidation of 3a-(2-amino-2-carboxyethyl)-4,5-dioxo-4,5,6,7,8,9-hexahydroquinoline-7,9-dicarboxylic-acid to PQQ. This chain is Pyrroloquinoline-quinone synthase, found in Gluconobacter oxydans (strain 621H) (Gluconobacter suboxydans).